We begin with the raw amino-acid sequence, 406 residues long: Phosphopentomutase (406 aa).

Residues aspartate 10, aspartate 305, histidine 310, aspartate 346, histidine 347, and histidine 358 each coordinate Mn(2+).

The protein belongs to the phosphopentomutase family. Requires Mn(2+) as cofactor.

Its subcellular location is the cytoplasm. The catalysed reaction is 2-deoxy-alpha-D-ribose 1-phosphate = 2-deoxy-D-ribose 5-phosphate. The enzyme catalyses alpha-D-ribose 1-phosphate = D-ribose 5-phosphate. It participates in carbohydrate degradation; 2-deoxy-D-ribose 1-phosphate degradation; D-glyceraldehyde 3-phosphate and acetaldehyde from 2-deoxy-alpha-D-ribose 1-phosphate: step 1/2. Its function is as follows. Isomerase that catalyzes the conversion of deoxy-ribose 1-phosphate (dRib-1-P) and ribose 1-phosphate (Rib-1-P) to deoxy-ribose 5-phosphate (dRib-5-P) and ribose 5-phosphate (Rib-5-P), respectively. The polypeptide is Phosphopentomutase (Aliivibrio fischeri (strain MJ11) (Vibrio fischeri)).